Reading from the N-terminus, the 130-residue chain is Small ribosomal subunit protein uS11 (130 aa).

The tract at residues 111–130 (IRDVTPVPHNGSRPPKRRRA) is disordered.

Belongs to the universal ribosomal protein uS11 family. In terms of assembly, part of the 30S ribosomal subunit. Interacts with proteins S7 and S18. Binds to IF-3.

Its function is as follows. Located on the platform of the 30S subunit, it bridges several disparate RNA helices of the 16S rRNA. Forms part of the Shine-Dalgarno cleft in the 70S ribosome. The protein is Small ribosomal subunit protein uS11 of Lactobacillus acidophilus (strain ATCC 700396 / NCK56 / N2 / NCFM).